A 2040-amino-acid polypeptide reads, in one-letter code: Apolipoprotein(a) (2040 aa).

The signal sequence occupies residues 1 to 19 (MEHKEVVLLLLLFLKSAAP). Kringle domains are found at residues 27-105 (DCYH…LTQC), 141-219 (ECYH…LTQC), 255-333 (ECYH…LTQC), 369-447 (ECYH…LTQC), 483-561 (ECYH…LTQC), 597-675 (ECYH…LTQC), 711-789 (ECYH…LTQC), 825-903 (ECYH…LTQC), 939-1017 (ECYH…LTRC), and 1053-1131 (DCYY…LTQC). Cystine bridges form between Cys28-Cys105, Cys49-Cys88, Cys77-Cys100, Cys142-Cys219, Cys163-Cys202, Cys191-Cys214, Cys256-Cys333, Cys277-Cys316, Cys305-Cys328, Cys370-Cys447, Cys391-Cys430, Cys419-Cys442, Cys484-Cys561, Cys505-Cys544, Cys533-Cys556, Cys598-Cys675, Cys619-Cys658, Cys647-Cys670, Cys712-Cys789, Cys733-Cys772, Cys761-Cys784, Cys826-Cys903, Cys847-Cys886, Cys875-Cys898, Cys940-Cys1017, Cys961-Cys1000, Cys989-Cys1012, Cys1054-Cys1131, Cys1075-Cys1114, and Cys1103-Cys1126. A glycan (N-linked (GlcNAc...) asparagine) is linked at Asn61. Asn101 carries N-linked (GlcNAc...) asparagine glycosylation. N-linked (GlcNAc...) asparagine glycosylation is present at Asn215. An N-linked (GlcNAc...) asparagine glycan is attached at Asn329. Residue Asn443 is glycosylated (N-linked (GlcNAc...) asparagine). Residue Asn557 is glycosylated (N-linked (GlcNAc...) asparagine). An N-linked (GlcNAc...) asparagine glycan is attached at Asn671. Asn785 carries N-linked (GlcNAc...) asparagine glycosylation. Asn899 is a glycosylation site (N-linked (GlcNAc...) asparagine). An N-linked (GlcNAc...) asparagine glycan is attached at Asn1013. The N-linked (GlcNAc...) asparagine glycan is linked to Asn1127. The disordered stretch occupies residues 1147 to 1166 (DPSTEASSEEAPTEQSPGVQ). 2 Kringle domains span residues 1167–1245 (DCYH…LTQC) and 1273–1351 (DCYH…LTQC). Intrachain disulfides connect Cys1168-Cys1245, Cys1189-Cys1228, Cys1217-Cys1240, Cys1274-Cys1351, Cys1295-Cys1334, and Cys1323-Cys1346. N-linked (GlcNAc...) asparagine glycosylation occurs at Asn1241. Asn1347 and Asn1381 each carry an N-linked (GlcNAc...) asparagine glycan. A disordered region spans residues 1365–1388 (VPVPSTELPSEEAPTENSTGVQDC). One can recognise a Kringle 13 domain in the interval 1387–1465 (DCYRGDGQSY…RWEYCNLTRC (79 aa)). 3 disulfide bridges follow: Cys1388–Cys1465, Cys1409–Cys1448, and Cys1437–Cys1460. A glycan (N-linked (GlcNAc...) asparagine) is linked at Asn1461. The tract at residues 1476 to 1497 (PTVAPVPSTEAPSEQAPPEKSP) is disordered. 3 consecutive Kringle domains span residues 1501–1579 (DCYH…LTQC), 1615–1693 (QCYH…LTRC), and 1719–1799 (DCMF…IPLC). Disulfide bonds link Cys1502–Cys1579, Cys1523–Cys1562, Cys1551–Cys1574, Cys1616–Cys1693, Cys1637–Cys1676, Cys1665–Cys1688, Cys1720–Cys1799, Cys1741–Cys1782, Cys1770–Cys1794, and Cys1846–Cys1862. A glycan (N-linked (GlcNAc...) asparagine) is linked at Asn1575. N-linked (GlcNAc...) asparagine glycosylation occurs at Asn1689. A Peptidase S1 domain is found at 1820–2038 (IVGGCVAHPH…FVTWIEGMMR (219 aa)). Residues His1861 and Asp1904 each act as charge relay system in the active site. 3 disulfides stabilise this stretch: Cys1938/Cys1996, Cys1968/Cys1975, and Cys1986/Cys2014. Ser1990 (charge relay system) is an active-site residue.

The protein belongs to the peptidase S1 family. Plasminogen subfamily. As to quaternary structure, disulfide-linked to apo-B100. Binds to fibronectin and decorin. In terms of processing, N- and O-glycosylated. The N-glycans are complex biantennary structures present in either a mono- or disialylated state. The O-glycans are mostly (80%) represented by the monosialylated core type I structure, NeuNAcalpha2-3Galbeta1-3GalNAc, with smaller amounts of disialylated and non-sialylated O-glycans also detected.

In terms of biological role, apo(a) is the main constituent of lipoprotein(a) (Lp(a)). It has serine proteinase activity and is able of autoproteolysis. Inhibits tissue-type plasminogen activator 1. Lp(a) may be a ligand for megalin/Gp 330. This Homo sapiens (Human) protein is Apolipoprotein(a) (LPA).